The sequence spans 160 residues: Phosphopantetheine adenylyltransferase (160 aa).

Ser-10 contacts substrate. ATP is bound by residues 10–11 (SF) and His-18. Substrate is bound by residues Lys-42, Leu-74, and Arg-88. ATP is bound by residues 89–91 (GLR), Glu-99, and 124–130 (YSFLSSS).

The protein belongs to the bacterial CoaD family. Homohexamer. Mg(2+) serves as cofactor.

The protein resides in the cytoplasm. It catalyses the reaction (R)-4'-phosphopantetheine + ATP + H(+) = 3'-dephospho-CoA + diphosphate. Its pathway is cofactor biosynthesis; coenzyme A biosynthesis; CoA from (R)-pantothenate: step 4/5. In terms of biological role, reversibly transfers an adenylyl group from ATP to 4'-phosphopantetheine, yielding dephospho-CoA (dPCoA) and pyrophosphate. This Bacillus pumilus (strain SAFR-032) protein is Phosphopantetheine adenylyltransferase.